Consider the following 116-residue polypeptide: Large ribosomal subunit protein bL20 (116 aa).

The protein belongs to the bacterial ribosomal protein bL20 family.

In terms of biological role, binds directly to 23S ribosomal RNA and is necessary for the in vitro assembly process of the 50S ribosomal subunit. It is not involved in the protein synthesizing functions of that subunit. This Desulfosudis oleivorans (strain DSM 6200 / JCM 39069 / Hxd3) (Desulfococcus oleovorans) protein is Large ribosomal subunit protein bL20.